A 206-amino-acid polypeptide reads, in one-letter code: Elongation factor Ts (206 aa).

Positions 81–84 (TDFV) are involved in Mg(2+) ion dislocation from EF-Tu.

This sequence belongs to the EF-Ts family.

The protein localises to the cytoplasm. Functionally, associates with the EF-Tu.GDP complex and induces the exchange of GDP to GTP. It remains bound to the aminoacyl-tRNA.EF-Tu.GTP complex up to the GTP hydrolysis stage on the ribosome. The polypeptide is Elongation factor Ts (Maridesulfovibrio salexigens (strain ATCC 14822 / DSM 2638 / NCIMB 8403 / VKM B-1763) (Desulfovibrio salexigens)).